Here is a 362-residue protein sequence, read N- to C-terminus: Chorismate synthase (362 aa).

Position 47 (Arg-47) interacts with NADP(+). Residues 124-126 (RAS), Gly-286, 301-305 (KPTAT), and Arg-327 each bind FMN.

It belongs to the chorismate synthase family. In terms of assembly, homotetramer. FMNH2 serves as cofactor.

It catalyses the reaction 5-O-(1-carboxyvinyl)-3-phosphoshikimate = chorismate + phosphate. Its pathway is metabolic intermediate biosynthesis; chorismate biosynthesis; chorismate from D-erythrose 4-phosphate and phosphoenolpyruvate: step 7/7. Functionally, catalyzes the anti-1,4-elimination of the C-3 phosphate and the C-6 proR hydrogen from 5-enolpyruvylshikimate-3-phosphate (EPSP) to yield chorismate, which is the branch point compound that serves as the starting substrate for the three terminal pathways of aromatic amino acid biosynthesis. This reaction introduces a second double bond into the aromatic ring system. The sequence is that of Chorismate synthase from Synechococcus sp. (strain WH7803).